A 147-amino-acid chain; its full sequence is Heavy metal-associated isoprenylated plant protein 27 (147 aa).

The region spanning 18–82 is the HMA domain; the sequence is FQKVEIKVKM…VMHRTGKKAE (65 aa). 2 residues coordinate a metal cation: cysteine 29 and cysteine 32. Residue cysteine 144 is modified to Cysteine methyl ester. A lipid anchor (S-farnesyl cysteine) is attached at cysteine 144. The propeptide at 145 to 147 is removed in mature form; it reads TIM.

The protein belongs to the HIPP family. As to quaternary structure, interacts with UBP16. Interacts with ZHD11/HB29.

It localises to the membrane. Its function is as follows. Heavy-metal-binding protein. Binds cadmium. May be involved in cadmium transport and play a role in cadmium detoxification. This chain is Heavy metal-associated isoprenylated plant protein 27, found in Arabidopsis thaliana (Mouse-ear cress).